Consider the following 387-residue polypeptide: 1-deoxy-D-xylulose 5-phosphate reductoisomerase (387 aa).

Residues Thr10, Gly11, Ser12, Ile13, and Asn124 each contribute to the NADPH site. Lys125 lines the 1-deoxy-D-xylulose 5-phosphate pocket. Glu126 contacts NADPH. Position 150 (Asp150) interacts with Mn(2+). Ser151, Glu152, Ser176, and His199 together coordinate 1-deoxy-D-xylulose 5-phosphate. Glu152 lines the Mn(2+) pocket. An NADPH-binding site is contributed by Gly205. 1-deoxy-D-xylulose 5-phosphate contacts are provided by Ser212, Asn217, Lys218, and Glu221. Glu221 contributes to the Mn(2+) binding site.

It belongs to the DXR family. Mg(2+) is required as a cofactor. It depends on Mn(2+) as a cofactor.

The enzyme catalyses 2-C-methyl-D-erythritol 4-phosphate + NADP(+) = 1-deoxy-D-xylulose 5-phosphate + NADPH + H(+). The protein operates within isoprenoid biosynthesis; isopentenyl diphosphate biosynthesis via DXP pathway; isopentenyl diphosphate from 1-deoxy-D-xylulose 5-phosphate: step 1/6. Its function is as follows. Catalyzes the NADPH-dependent rearrangement and reduction of 1-deoxy-D-xylulose-5-phosphate (DXP) to 2-C-methyl-D-erythritol 4-phosphate (MEP). This is 1-deoxy-D-xylulose 5-phosphate reductoisomerase from Clostridium beijerinckii (strain ATCC 51743 / NCIMB 8052) (Clostridium acetobutylicum).